A 253-amino-acid chain; its full sequence is Imidazole glycerol phosphate synthase subunit HisF (253 aa).

Residues aspartate 11 and aspartate 130 contribute to the active site.

It belongs to the HisA/HisF family. As to quaternary structure, heterodimer of HisH and HisF.

Its subcellular location is the cytoplasm. The enzyme catalyses 5-[(5-phospho-1-deoxy-D-ribulos-1-ylimino)methylamino]-1-(5-phospho-beta-D-ribosyl)imidazole-4-carboxamide + L-glutamine = D-erythro-1-(imidazol-4-yl)glycerol 3-phosphate + 5-amino-1-(5-phospho-beta-D-ribosyl)imidazole-4-carboxamide + L-glutamate + H(+). The protein operates within amino-acid biosynthesis; L-histidine biosynthesis; L-histidine from 5-phospho-alpha-D-ribose 1-diphosphate: step 5/9. Its function is as follows. IGPS catalyzes the conversion of PRFAR and glutamine to IGP, AICAR and glutamate. The HisF subunit catalyzes the cyclization activity that produces IGP and AICAR from PRFAR using the ammonia provided by the HisH subunit. The protein is Imidazole glycerol phosphate synthase subunit HisF of Desulfitobacterium hafniense (strain DSM 10664 / DCB-2).